Reading from the N-terminus, the 120-residue chain is Large ribosomal subunit protein bL17 (120 aa).

It belongs to the bacterial ribosomal protein bL17 family. In terms of assembly, part of the 50S ribosomal subunit. Contacts protein L32.

This chain is Large ribosomal subunit protein bL17, found in Shouchella clausii (strain KSM-K16) (Alkalihalobacillus clausii).